A 283-amino-acid chain; its full sequence is Protein FDD123 (283 aa).

7 consecutive transmembrane segments (helical) span residues 24–44 (WLWA…AWTF), 52–72 (LFHQ…FSMA), 97–117 (YIQW…ATGL), 122–142 (IFTT…AALV), 148–168 (WGYY…LLWH), 185–205 (ILAA…WACA), and 217–237 (MIWY…FFLW).

The protein belongs to the archaeal/bacterial/fungal opsin family.

The protein resides in the membrane. The protein is Protein FDD123 (FDD123) of Trametes versicolor (White-rot fungus).